A 486-amino-acid chain; its full sequence is Elastin-binding protein EbpS (486 aa).

The span at 1–40 (MSNNFKDDFEKNRQSIDTNSHQDHTEDVEKDQSELEHQDT) shows a compositional bias: basic and acidic residues. The tract at residues 1–314 (MSNNFKDDFE…NHDRDKERKK (314 aa)) is disordered. At 2 to 204 (SNNFKDDFEK…ESKDHHSGKK (203 aa)) the chain is on the extracellular side. Residues 14–34 (QSIDTNSHQDHTEDVEKDQSE) are elastin-binding. The segment covering 64-85 (TNHNKQVHNESQTSEDNVQNEA) has biased composition (polar residues). Composition is skewed to basic and acidic residues over residues 103–118 (EPSH…EEYY), 126–160 (DKSH…KSEA), and 180–199 (SKDK…SKDH). 2 stretches are compositionally biased toward low complexity: residues 204–225 (KGAA…MGVS) and 233–246 (DAQN…SNNS). Residues 205–225 (GAAIGAGTAGVAGAAGAMGVS) traverse the membrane as a helical segment. At 226–319 (KAKKHSNDAQ…KERKKGGMAK (94 aa)) the chain is on the cytoplasmic side. Positions 247 to 259 (TEDKVSQDKSKDH) are enriched in basic and acidic residues. Over residues 278 to 297 (GAASKSASAASKPHASNNAS) the composition is skewed to low complexity. Residues 299–314 (NHDEHDNHDRDKERKK) show a composition bias toward basic and acidic residues. Residues 320–340 (VLLPLIAAVLIIGALAIFGGM) traverse the membrane as a helical segment. The Extracellular segment spans residues 341-486 (ALNNHNNGTK…IRNGQQIVIP (146 aa)). Residues 351–440 (ENKIANTNKN…QRQGGGQRHT (90 aa)) form a disordered region. A compositionally biased stretch (basic and acidic residues) spans 361-398 (NADESKDKDTSKDASKDKSKSTDSDKSKEDQDKATKDE). Low complexity predominate over residues 403 to 431 (QNNANQANNQAQNNQNQQQANQNQQQQQQ). The LysM domain occupies 437–485 (QRHTVNGQENLYRIAIQYYGSGSPENVEKIRRANGLSGNNIRNGQQIVI).

Its subcellular location is the cell membrane. Promotes binding of soluble elastin peptides and tropoelastin to S.aureus cells although it is not able to promote bacterial adherence to immobilized elastin and, therefore, is not a microbial surface component recognizing adhesive matrix molecule (MSCRAMM). The polypeptide is Elastin-binding protein EbpS (ebpS) (Staphylococcus aureus (strain MSSA476)).